Consider the following 351-residue polypeptide: Peroxidase C1B (351 aa).

The N-terminal stretch at 1-28 (MHSPSSTSFTWILITLGCLAFYASLSDA) is a signal peptide. Intrachain disulfides connect Cys-39–Cys-119, Cys-72–Cys-77, Cys-125–Cys-329, and Cys-205–Cys-237. Asn-41 carries an N-linked (GlcNAc...) asparagine glycan. His-70 serves as the catalytic Proton acceptor. Ca(2+) is bound by residues Asp-71, Val-74, Gly-76, Asp-78, and Ser-80. Asn-85 carries an N-linked (GlcNAc...) asparagine glycan. Pro-167 contacts substrate. His-198 contacts heme b. Ca(2+) is bound at residue Thr-199. Asn-214, Asn-226, and Asn-242 each carry an N-linked (GlcNAc...) asparagine glycan. Asp-250, Thr-253, and Asp-258 together coordinate Ca(2+). N-linked (GlcNAc...) asparagine glycosylation occurs at Asn-283.

The protein belongs to the peroxidase family. Classical plant (class III) peroxidase subfamily. Ca(2+) is required as a cofactor. Heme b serves as cofactor.

The protein localises to the secreted. It localises to the vacuole. The enzyme catalyses 2 a phenolic donor + H2O2 = 2 a phenolic radical donor + 2 H2O. In terms of biological role, removal of H(2)O(2), oxidation of toxic reductants, biosynthesis and degradation of lignin, suberization, auxin catabolism, response to environmental stresses such as wounding, pathogen attack and oxidative stress. These functions might be dependent on each isozyme/isoform in each plant tissue. In Armoracia rusticana (Horseradish), this protein is Peroxidase C1B (PRXC1B).